The sequence spans 357 residues: Peptide chain release factor 1 (357 aa).

At Gln236 the chain carries N5-methylglutamine.

The protein belongs to the prokaryotic/mitochondrial release factor family. Post-translationally, methylated by PrmC. Methylation increases the termination efficiency of RF1.

Its subcellular location is the cytoplasm. Peptide chain release factor 1 directs the termination of translation in response to the peptide chain termination codons UAG and UAA. In Mycolicibacterium paratuberculosis (strain ATCC BAA-968 / K-10) (Mycobacterium paratuberculosis), this protein is Peptide chain release factor 1.